The chain runs to 84 residues: MALSSQIWAACLLLLLLLASLTSGSVFPQQTGQLAELQPQDRAGARASWMPMFQRRRRRDTHFPICIFCCGCCHRSKCGMCCKT.

The signal sequence occupies residues 1-24 (MALSSQIWAACLLLLLLLASLTSG). The propeptide occupies 25-54 (SVFPQQTGQLAELQPQDRAGARASWMPMFQ). 4 disulfides stabilise this stretch: C66/C82, C69/C72, C70/C78, and C73/C81.

This sequence belongs to the hepcidin family. Interacts with SLC40A1; this interaction promotes SLC40A1 rapid ubiquitination. Highest expression in liver and to a lesser extent in heart and brain. Low levels in lung, tonsils, salivary gland, trachea, prostate gland, adrenal gland and thyroid gland. Secreted into the urine and blood. Expressed by hepatocytes.

Its subcellular location is the secreted. Liver-produced hormone that constitutes the main circulating regulator of iron absorption and distribution across tissues. Acts by promoting endocytosis and degradation of ferroportin/SLC40A1, leading to the retention of iron in iron-exporting cells and decreased flow of iron into plasma. Controls the major flows of iron into plasma: absorption of dietary iron in the intestine, recycling of iron by macrophages, which phagocytose old erythrocytes and other cells, and mobilization of stored iron from hepatocytes. Functionally, has strong antimicrobial activity against E.coli ML35P N.cinerea and weaker against S.epidermidis, S.aureus and group b streptococcus bacteria. Active against the fungus C.albicans. No activity against P.aeruginosa. This is Hepcidin from Homo sapiens (Human).